We begin with the raw amino-acid sequence, 994 residues long: Bifunctional glutamine synthetase adenylyltransferase/adenylyl-removing enzyme (994 aa).

The tract at residues 1 to 487 (MVVTKLATQR…LHTKLFYQPL (487 aa)) is adenylyl removase. An adenylyl transferase region spans residues 492–994 (GPTGLEIAHG…KAVVRKVFGS (503 aa)).

The protein belongs to the GlnE family. The cofactor is Mg(2+).

The enzyme catalyses [glutamine synthetase]-O(4)-(5'-adenylyl)-L-tyrosine + phosphate = [glutamine synthetase]-L-tyrosine + ADP. It carries out the reaction [glutamine synthetase]-L-tyrosine + ATP = [glutamine synthetase]-O(4)-(5'-adenylyl)-L-tyrosine + diphosphate. Functionally, involved in the regulation of glutamine synthetase GlnA, a key enzyme in the process to assimilate ammonia. When cellular nitrogen levels are high, the C-terminal adenylyl transferase (AT) inactivates GlnA by covalent transfer of an adenylyl group from ATP to specific tyrosine residue of GlnA, thus reducing its activity. Conversely, when nitrogen levels are low, the N-terminal adenylyl removase (AR) activates GlnA by removing the adenylyl group by phosphorolysis, increasing its activity. The regulatory region of GlnE binds the signal transduction protein PII (GlnB) which indicates the nitrogen status of the cell. This chain is Bifunctional glutamine synthetase adenylyltransferase/adenylyl-removing enzyme, found in Mycobacterium tuberculosis (strain CDC 1551 / Oshkosh).